We begin with the raw amino-acid sequence, 284 residues long: Tropomyosin (284 aa).

Residues 1–284 (MDSIKKKMMA…DTTFAELTSF (284 aa)) are a coiled coil. The tract at residues 97-140 (EDFEQSSGRLTETSTKLDDASKAAEESERNRKTLETRSISDDER) is disordered. Positions 101 to 110 (QSSGRLTETS) are enriched in polar residues. A compositionally biased stretch (basic and acidic residues) spans 111–140 (TKLDDASKAAEESERNRKTLETRSISDDER).

Belongs to the tropomyosin family. As to quaternary structure, homodimer.

Tropomyosin, in association with the troponin complex, plays a central role in the calcium dependent regulation of muscle contraction. The polypeptide is Tropomyosin (Echinococcus multilocularis (Fox tapeworm)).